Consider the following 501-residue polypeptide: Endoglucanase 8 (501 aa).

The signal sequence occupies residues 1–35; sequence MKPRSSRDGHNAAAAAALLLAALVLSGDVLPAVVA. The active-site Nucleophile is the D95. The N-linked (GlcNAc...) asparagine glycan is linked to N298. H414 is an active-site residue. N-linked (GlcNAc...) asparagine glycosylation occurs at N462. D465 is an active-site residue. An N-linked (GlcNAc...) asparagine glycan is attached at N469. The active site involves E474.

It belongs to the glycosyl hydrolase 9 (cellulase E) family.

The protein localises to the secreted. The enzyme catalyses Endohydrolysis of (1-&gt;4)-beta-D-glucosidic linkages in cellulose, lichenin and cereal beta-D-glucans.. This chain is Endoglucanase 8, found in Oryza sativa subsp. japonica (Rice).